The primary structure comprises 406 residues: Argininosuccinate synthase (406 aa).

Residue 8–16 (AYSGGLDTS) participates in ATP binding. An L-citrulline-binding site is contributed by Y86. G116 provides a ligand contact to ATP. T118, N122, and D123 together coordinate L-aspartate. N122 provides a ligand contact to L-citrulline. L-citrulline-binding residues include R126, S174, E259, and Y271.

This sequence belongs to the argininosuccinate synthase family. Type 1 subfamily. Homotetramer.

Its subcellular location is the cytoplasm. The enzyme catalyses L-citrulline + L-aspartate + ATP = 2-(N(omega)-L-arginino)succinate + AMP + diphosphate + H(+). Its pathway is amino-acid biosynthesis; L-arginine biosynthesis; L-arginine from L-ornithine and carbamoyl phosphate: step 2/3. The protein is Argininosuccinate synthase of Lacticaseibacillus paracasei (strain ATCC 334 / BCRC 17002 / CCUG 31169 / CIP 107868 / KCTC 3260 / NRRL B-441) (Lactobacillus paracasei).